The primary structure comprises 116 residues: Ly-6/neurotoxin-like protein 1 (116 aa).

Residues 1-20 form the signal peptide; that stretch reads MTPLLTLILVVLMGLPLAQA. A UPAR/Ly6 domain is found at 21–105; the sequence is LDCHVCAYNG…LATPATLALA (85 aa). 5 disulfides stabilise this stretch: cysteine 23–cysteine 46, cysteine 26–cysteine 33, cysteine 39–cysteine 64, cysteine 68–cysteine 85, and cysteine 86–cysteine 91. Asparagine 92 carries GPI-anchor amidated asparagine lipidation. A propeptide spans 93-116 (removed in mature form); the sequence is GAGLATPATLALAPILLATLWGLL.

As to quaternary structure, interacts with nAChRs containing alpha-4:beta-2 (CHRNA4:CHRNB2) and alpha-7 (CHRNA7) subunits. Interacts with CHRNA4 probably in the endoplasmic reticulum prior to nAChR pentameric assembly. Interacts with KCNA2/Potassium voltage-gated channel subfamily A member 2.

The protein localises to the cell membrane. It localises to the cell projection. The protein resides in the dendrite. It is found in the endoplasmic reticulum. Its function is as follows. Acts in different tissues through interaction to nicotinic acetylcholine receptors (nAChRs). The proposed role as modulator of nAChR activity seems to be dependent on the nAChR subtype and stoichiometry, and to involve an effect on nAChR trafficking and its cell surface expression, and on single channel properties of the nAChR inserted in the plasma membrane. Modulates functional properties of nicotinic acetylcholine receptors (nAChRs) to prevent excessive excitation, and hence neurodegeneration. Enhances desensitization by increasing both the rate and extent of desensitization of alpha-4:beta-2-containing nAChRs and slowing recovery from desensitization. Promotes large amplitude ACh-evoked currents through alpha-4:beta-2 nAChRs. Is involved in regulation of the nAChR pentameric assembly in the endoplasmic reticulum. Shifts stoichiometry from high sensitivity alpha-4(2):beta-2(3) to low sensitivity alpha-4(3):beta-2(2) nAChR. In vitro modulates alpha-3:beta-4-containing nAChRs. Reduces cell surface expression of (alpha-3:beta-4)(2):beta-4 and (alpha-3:beta-4)(2):alpha-5 nAChRs suggesting an interaction with nAChR alpha-3(-):(+)beta-4 subunit interfaces and an allosteric mode. Corresponding single channel effects characterized by decreased unitary conductance, altered burst proportions and enhanced desensitization/inactivation seem to depend on nAChR alpha:alpha subunit interfaces and are greater in (alpha-3:beta-2)(2):alpha-3 when compared to (alpha-3:beta-2)(2):alpha-5 nAChRs. Prevents plasticity in the primary visual cortex late in life. This Pan troglodytes (Chimpanzee) protein is Ly-6/neurotoxin-like protein 1.